Here is an 82-residue protein sequence, read N- to C-terminus: MAVFHDEVEIEDFQYDEDSETYFYPCPCGDNFCITKEDLENGEDVATCPSCSLIIKVIYDKDQFTCGETVPAPSTNKELVKC.

The DPH-type MB domain maps to 4 to 60 (FHDEVEIEDFQYDEDSETYFYPCPCGDNFCITKEDLENGEDVATCPSCSLIIKVIYD). Residues Cys-26, Cys-28, Cys-48, and Cys-51 each coordinate Fe cation.

This sequence belongs to the DPH3 family. As to quaternary structure, component of the 2-(3-amino-3-carboxypropyl)histidine synthase complex composed of DPH1, DPH2, DPH3 and a NADH-dependent reductase. Interacts with SERGEF. It depends on Fe(2+) as a cofactor.

Its subcellular location is the cytoplasm. The protein resides in the nucleus. It carries out the reaction [3Fe-4S](1+)-[protein] + Fe(2+)-[Dph3] = [3Fe-4S](0)-[protein] + Fe(3+)-[Dph3]. It catalyses the reaction 2 [3Fe-4S](0)-[protein] + 2 Fe(2+)-[Dph3] + NADH = 2 [4Fe-4S](1+)-[protein] + 2 [Dph3] + NAD(+) + H(+). Its pathway is protein modification; peptidyl-diphthamide biosynthesis. Required for the first step of diphthamide biosynthesis, a post-translational modification of histidine which occurs in elongation factor 2. DPH1 and DPH2 transfer a 3-amino-3-carboxypropyl (ACP) group from S-adenosyl-L-methionine (SAM) to a histidine residue, the reaction is assisted by a reduction system comprising DPH3 and a NADH-dependent reductase. Acts as an electron donor to reduce the Fe-S cluster in DPH1-DPH2 keeping the [4Fe-4S] clusters in the active and reduced state. Restores iron to DPH1-DPH2 iron-sulfur clusters which have degraded from [4Fe-4S] to [3Fe-4S] by donating an iron atom to reform [4Fe-4S] clusters, in a manner dependent on the presence of elongation factor 2 and SAM. Associates with the elongator complex and is required for tRNA Wobble base modifications mediated by the elongator complex. The elongator complex is required for multiple tRNA modifications, including mcm5U (5-methoxycarbonylmethyl uridine), mcm5s 2U (5-methoxycarbonylmethyl-2-thiouridine), and ncm5U (5-carbamoylmethyl uridine). This chain is Diphthamide biosynthesis protein 3 (DPH3), found in Bos taurus (Bovine).